The following is a 315-amino-acid chain: Lipoyl synthase (315 aa).

[4Fe-4S] cluster-binding residues include cysteine 62, cysteine 67, cysteine 73, cysteine 88, cysteine 92, cysteine 95, and serine 302. The 218-residue stretch at 74 to 291 folds into the Radical SAM core domain; that stretch reads FGKGTATFMI…ETEALAMGFK (218 aa).

The protein belongs to the radical SAM superfamily. Lipoyl synthase family. [4Fe-4S] cluster is required as a cofactor.

The protein localises to the cytoplasm. The enzyme catalyses [[Fe-S] cluster scaffold protein carrying a second [4Fe-4S](2+) cluster] + N(6)-octanoyl-L-lysyl-[protein] + 2 oxidized [2Fe-2S]-[ferredoxin] + 2 S-adenosyl-L-methionine + 4 H(+) = [[Fe-S] cluster scaffold protein] + N(6)-[(R)-dihydrolipoyl]-L-lysyl-[protein] + 4 Fe(3+) + 2 hydrogen sulfide + 2 5'-deoxyadenosine + 2 L-methionine + 2 reduced [2Fe-2S]-[ferredoxin]. Its pathway is protein modification; protein lipoylation via endogenous pathway; protein N(6)-(lipoyl)lysine from octanoyl-[acyl-carrier-protein]: step 2/2. Functionally, catalyzes the radical-mediated insertion of two sulfur atoms into the C-6 and C-8 positions of the octanoyl moiety bound to the lipoyl domains of lipoate-dependent enzymes, thereby converting the octanoylated domains into lipoylated derivatives. The polypeptide is Lipoyl synthase (Aromatoleum aromaticum (strain DSM 19018 / LMG 30748 / EbN1) (Azoarcus sp. (strain EbN1))).